A 522-amino-acid polypeptide reads, in one-letter code: Transactivator/viroplasmin protein (522 aa).

Polar residues predominate over residues 111-126; it reads QGIQIPQKSEPNSSVA. Disordered stretches follow at residues 111 to 133 and 491 to 522; these read QGIQ…AESG and SADS…KASG.

Belongs to the caulimoviridae viroplasmin family.

It localises to the host cytoplasm. Functionally, enhances the ribosomal termination-reinitiation event leading to the translation of major open reading frames on the polycistronic viral RNAs. The chain is Transactivator/viroplasmin protein from Arabidopsis thaliana (Mouse-ear cress).